The sequence spans 157 residues: Capsid protein (157 aa).

N-acetylserine; by host is present on serine 2.

It belongs to the virgaviridae capsid protein family.

Its subcellular location is the virion. Its function is as follows. Capsid protein self-assembles to form rod-shaped virions about 18 nm in diameter with a central canal enclosing the viral genomic RNA. In Brassicaceae (TVCV), this protein is Capsid protein (CP).